The sequence spans 1087 residues: Transcription factor AP2-Z (1087 aa).

The segment at residues 586–682 is a DNA-binding region (AP2); it reads GRVYKVIVRG…IKYNSVPDSL (97 aa).

It belongs to the AP2/ERF transcription factor family. AP2 subfamily.

Its subcellular location is the nucleus. The protein localises to the chromosome. Transcription factor which binds the 5'-[TC][AC]TG[AT]AC[AG]-3' motif. During the mosquito vector stage, plays an essential role in the zygote for de novo transcription of genes required for ookinete formation. The protein is Transcription factor AP2-Z of Plasmodium berghei (strain Anka).